The following is a 466-amino-acid chain: A-type ATP synthase subunit B (466 aa).

It belongs to the ATPase alpha/beta chains family. In terms of assembly, has multiple subunits with at least A(3), B(3), C, D, E, F, H, I and proteolipid K(x).

The protein localises to the cell membrane. Functionally, component of the A-type ATP synthase that produces ATP from ADP in the presence of a proton gradient across the membrane. The B chain is a regulatory subunit. This chain is A-type ATP synthase subunit B, found in Metallosphaera sedula (strain ATCC 51363 / DSM 5348 / JCM 9185 / NBRC 15509 / TH2).